Here is a 190-residue protein sequence, read N- to C-terminus: Putative glutathione-dependent formaldehyde-activating enzyme (190 aa).

The 147-residue stretch at 19-165 (FKGGKLYCHC…FRKVGLQPYD (147 aa)) folds into the CENP-V/GFA domain. Zn(2+)-binding residues include C26, C28, C47, C49, C52, C94, and C97.

The protein belongs to the Gfa family. Requires Zn(2+) as cofactor.

The catalysed reaction is S-(hydroxymethyl)glutathione = glutathione + formaldehyde. The protein operates within one-carbon metabolism; formaldehyde degradation; formate from formaldehyde (glutathione route): step 1/3. Catalyzes the condensation of formaldehyde and glutathione to S-hydroxymethylglutathione. This chain is Putative glutathione-dependent formaldehyde-activating enzyme, found in Pyrenophora teres f. teres (strain 0-1) (Barley net blotch fungus).